The primary structure comprises 482 residues: Glutamyl-tRNA(Gln) amidotransferase subunit A (482 aa).

Catalysis depends on charge relay system residues lysine 81 and serine 156. Serine 180 serves as the catalytic Acyl-ester intermediate.

The protein belongs to the amidase family. GatA subfamily. Heterotrimer of A, B and C subunits.

It catalyses the reaction L-glutamyl-tRNA(Gln) + L-glutamine + ATP + H2O = L-glutaminyl-tRNA(Gln) + L-glutamate + ADP + phosphate + H(+). Functionally, allows the formation of correctly charged Gln-tRNA(Gln) through the transamidation of misacylated Glu-tRNA(Gln) in organisms which lack glutaminyl-tRNA synthetase. The reaction takes place in the presence of glutamine and ATP through an activated gamma-phospho-Glu-tRNA(Gln). This is Glutamyl-tRNA(Gln) amidotransferase subunit A from Brachyspira hyodysenteriae (strain ATCC 49526 / WA1).